The sequence spans 78 residues: D-alanyl carrier protein (78 aa).

Residues 1–78 enclose the Carrier domain; the sequence is MAFRENVLEI…MIITQLEALK (78 aa). S36 is subject to O-(pantetheine 4'-phosphoryl)serine.

Belongs to the DltC family. Post-translationally, 4'-phosphopantetheine is transferred from CoA to a specific serine of apo-DCP.

The protein resides in the cytoplasm. It participates in cell wall biogenesis; lipoteichoic acid biosynthesis. Carrier protein involved in the D-alanylation of lipoteichoic acid (LTA). The loading of thioester-linked D-alanine onto DltC is catalyzed by D-alanine--D-alanyl carrier protein ligase DltA. The DltC-carried D-alanyl group is further transferred to cell membrane phosphatidylglycerol (PG) by forming an ester bond, probably catalyzed by DltD. D-alanylation of LTA plays an important role in modulating the properties of the cell wall in Gram-positive bacteria, influencing the net charge of the cell wall. This Listeria innocua serovar 6a (strain ATCC BAA-680 / CLIP 11262) protein is D-alanyl carrier protein.